The following is a 1004-amino-acid chain: 2-oxoglutarate dehydrogenase E1 component (1004 aa).

This sequence belongs to the alpha-ketoglutarate dehydrogenase family. Homodimer. Part of the 2-oxoglutarate dehydrogenase (OGDH) complex composed of E1 (2-oxoglutarate dehydrogenase), E2 (dihydrolipoamide succinyltransferase) and E3 (dihydrolipoamide dehydrogenase); the complex contains multiple copies of the three enzymatic components (E1, E2 and E3). Thiamine diphosphate is required as a cofactor.

The catalysed reaction is N(6)-[(R)-lipoyl]-L-lysyl-[protein] + 2-oxoglutarate + H(+) = N(6)-[(R)-S(8)-succinyldihydrolipoyl]-L-lysyl-[protein] + CO2. Functionally, E1 component of the 2-oxoglutarate dehydrogenase (OGDH) complex which catalyzes the decarboxylation of 2-oxoglutarate, the first step in the conversion of 2-oxoglutarate to succinyl-CoA and CO(2). The chain is 2-oxoglutarate dehydrogenase E1 component from Brucella canis (strain ATCC 23365 / NCTC 10854 / RM-666).